Consider the following 361-residue polypeptide: Phosphoserine aminotransferase (361 aa).

Residue R42 coordinates L-glutamate. Residues 76–77, W102, T153, D173, and Q196 contribute to the pyridoxal 5'-phosphate site; that span reads AR. Residue K197 is modified to N6-(pyridoxal phosphate)lysine. Residue 238-239 participates in pyridoxal 5'-phosphate binding; sequence NT.

It belongs to the class-V pyridoxal-phosphate-dependent aminotransferase family. SerC subfamily. Homodimer. It depends on pyridoxal 5'-phosphate as a cofactor.

It localises to the cytoplasm. The catalysed reaction is O-phospho-L-serine + 2-oxoglutarate = 3-phosphooxypyruvate + L-glutamate. The enzyme catalyses 4-(phosphooxy)-L-threonine + 2-oxoglutarate = (R)-3-hydroxy-2-oxo-4-phosphooxybutanoate + L-glutamate. It participates in amino-acid biosynthesis; L-serine biosynthesis; L-serine from 3-phospho-D-glycerate: step 2/3. Its pathway is cofactor biosynthesis; pyridoxine 5'-phosphate biosynthesis; pyridoxine 5'-phosphate from D-erythrose 4-phosphate: step 3/5. Catalyzes the reversible conversion of 3-phosphohydroxypyruvate to phosphoserine and of 3-hydroxy-2-oxo-4-phosphonooxybutanoate to phosphohydroxythreonine. This is Phosphoserine aminotransferase from Buchnera aphidicola subsp. Schizaphis graminum (strain Sg).